We begin with the raw amino-acid sequence, 417 residues long: Squalene synthase (417 aa).

Arg-52 and Arg-77 together coordinate NADP(+). Asp-80, Glu-83, and Asp-84 together coordinate Mg(2+). An NADP(+)-binding site is contributed by Arg-218. The helical transmembrane segment at 284–304 (SVFNFCAIPQVMAIATLAACY) threads the bilayer. Positions 315 and 317 each coordinate NADP(+). A helical membrane pass occupies residues 384–404 (PIYLSFVMLLAALSWQYLTTL).

This sequence belongs to the phytoene/squalene synthase family. Mg(2+) serves as cofactor. Widely expressed.

Its subcellular location is the endoplasmic reticulum membrane. It carries out the reaction 2 (2E,6E)-farnesyl diphosphate + NADPH + H(+) = squalene + 2 diphosphate + NADP(+). It catalyses the reaction 2 (2E,6E)-farnesyl diphosphate + NADH + H(+) = squalene + 2 diphosphate + NAD(+). The catalysed reaction is 2 (2E,6E)-farnesyl diphosphate = presqualene diphosphate + diphosphate. The enzyme catalyses presqualene diphosphate + NADH + H(+) = squalene + diphosphate + NAD(+). It carries out the reaction presqualene diphosphate + NADPH + H(+) = squalene + diphosphate + NADP(+). It participates in terpene metabolism; lanosterol biosynthesis; lanosterol from farnesyl diphosphate: step 1/3. In terms of biological role, catalyzes the condensation of 2 farnesyl pyrophosphate (FPP) moieties to form squalene. Proceeds in two distinct steps. In the first half-reaction, two molecules of FPP react to form the stable presqualene diphosphate intermediate (PSQPP), with concomitant release of a proton and a molecule of inorganic diphosphate. In the second half-reaction, PSQPP undergoes heterolysis, isomerization, and reduction with NADPH or NADH to form squalene. It is the first committed enzyme of the sterol biosynthesis pathway. In Homo sapiens (Human), this protein is Squalene synthase (FDFT1).